A 240-amino-acid polypeptide reads, in one-letter code: Insulin-like growth factor-binding protein 3 receptor (240 aa).

Residues 1–38 (MGNCQAGHNLHLCLAHHPPLVCATLILLLLGLSGLGLG) form the signal peptide. Over 39 to 204 (SFLLTHRTGL…SEELALCGSR (166 aa)) the chain is Extracellular. N-linked (GlcNAc...) asparagine glycans are attached at residues Asn73, Asn101, and Asn167. The helical transmembrane segment at 205–225 (LLVLGSFLLLFCGLLCCVTAM) threads the bilayer. The Cytoplasmic portion of the chain corresponds to 226–240 (CFHPRRESHWSRTRL).

In terms of assembly, interacts with IGFBP3. Interacts with CASP8. As to expression, widely expressed in normal tissues but suppressed in prostate and breast tumor.

It localises to the cell membrane. Cell death receptor specific for IGFBP3, may mediate caspase-8-dependent apoptosis upon ligand binding. The chain is Insulin-like growth factor-binding protein 3 receptor (TMEM219) from Homo sapiens (Human).